Consider the following 152-residue polypeptide: Large ribosomal subunit protein bL9 (152 aa).

Belongs to the bacterial ribosomal protein bL9 family.

In terms of biological role, binds to the 23S rRNA. The sequence is that of Large ribosomal subunit protein bL9 from Prochlorococcus marinus (strain MIT 9211).